Here is a 190-residue protein sequence, read N- to C-terminus: B3 domain-containing protein At4g01580 (190 aa).

The tract at residues 1–25 is disordered; the sequence is MVITRNMKARATSVSHRQSQQDPES. Positions 12–23 are enriched in polar residues; that stretch reads TSVSHRQSQQDP. The TF-B3 DNA-binding region spans 29–122; the sequence is KFFKLVLPST…SFRVIIFNAS (94 aa).

It localises to the nucleus. The polypeptide is B3 domain-containing protein At4g01580 (Arabidopsis thaliana (Mouse-ear cress)).